A 405-amino-acid chain; its full sequence is uncharacterized protein (405 aa).

The N-terminal stretch at 1 to 34 is a signal peptide; sequence MNKFLKYFLILLALVLIVVPIVFATLLFKTSQDA. The span at 348–359 shows a compositional bias: basic and acidic residues; it reads EQNDTTDKDKTS. The disordered stretch occupies residues 348 to 405; sequence EQNDTTDKDKTSNENSDSTNNSDSSNQQQPATDQNSNQNQGGTQQAPQASNNQNGVVN. Low complexity-rich tracts occupy residues 360–373 and 381–392; these read NENS…DSSN and QNSNQNQGGTQQ. Residues 393–405 show a composition bias toward polar residues; it reads APQASNNQNGVVN.

The protein belongs to the LytR/CpsA/Psr (LCP) family.

This is an uncharacterized protein from Staphylococcus aureus (strain NCTC 8325 / PS 47).